The primary structure comprises 126 residues: Large ribosomal subunit protein bL19 (126 aa).

The protein belongs to the bacterial ribosomal protein bL19 family.

Its function is as follows. This protein is located at the 30S-50S ribosomal subunit interface and may play a role in the structure and function of the aminoacyl-tRNA binding site. This is Large ribosomal subunit protein bL19 from Dechloromonas aromatica (strain RCB).